The primary structure comprises 30 residues: Bacteriocin curvaticin (30 aa).

Cysteines 9 and 14 form a disulfide.

Its subcellular location is the secreted. Has antibacterial activity against the Gram-positive bacterium L.monocytogenes. This is Bacteriocin curvaticin from Latilactobacillus curvatus (Lactobacillus curvatus).